The chain runs to 1241 residues: Nephrin (1241 aa).

An N-terminal signal peptide occupies residues 1–22 (MALGTTLRASLLLLGLLTEGLA). Residues 23–1055 (QLAIPASVPR…EDQLPTEPPS (1033 aa)) are Extracellular-facing. Ig-like C2-type domains follow at residues 27–130 (PASV…VILS), 143–234 (EAGT…SFTV), 242–333 (PPVI…HGIT), 340–434 (PSAI…KSLI), 440–540 (PAQK…TQLA), and 544–635 (PPTN…ETVS). N-linked (GlcNAc...) asparagine glycosylation occurs at Asn-40. 3 disulfides stabilise this stretch: Cys-53–Cys-111, Cys-160–Cys-217, and Cys-265–Cys-317. N-linked (GlcNAc...) asparagine glycosylation is found at Asn-356 and Asn-401. Cys-361 and Cys-417 are joined by a disulfide. Ser-432 carries the phosphoserine modification. A disulfide bridge connects residues Cys-465 and Cys-528. Residues Asn-547, Asn-553, Asn-564, Asn-577, Asn-680, and Asn-708 are each glycosylated (N-linked (GlcNAc...) asparagine). Cys-567 and Cys-623 are oxidised to a cystine. Ig-like C2-type domains lie at 740-832 (PTIR…LLRL) and 838-939 (PQVE…VSIS). 2 disulfides stabilise this stretch: Cys-761/Cys-816 and Cys-863/Cys-920. N-linked (GlcNAc...) asparagine glycosylation occurs at Asn-908. The Fibronectin type-III domain maps to 943–1038 (PPSGLKVVSL…TQLPITTPGL (96 aa)). The tract at residues 1025 to 1057 (ADKGTQLPITTPGLHQPSGEPEDQLPTEPPSGP) is disordered. The chain crosses the membrane as a helical span at residues 1056–1076 (GPSGLPLLPVLFALGGLLLLS). Topologically, residues 1077 to 1241 (NASCVGGVLW…LPFELRGHLV (165 aa)) are cytoplasmic. Ser-1098 bears the Phosphoserine mark. A compositionally biased stretch (basic and acidic residues) spans 1099 to 1114 (EKTEAGSEEDRVRNEY). A disordered region spans residues 1099 to 1137 (EKTEAGSEEDRVRNEYEESQWTGERDTQSSTVSTTEAEP). At Thr-1101 the chain carries Phosphothreonine. Residue Ser-1105 is modified to Phosphoserine. The interval 1160-1241 (RGFTGEDEDM…LPFELRGHLV (82 aa)) is binds to NPHS2. The residue at position 1193 (Tyr-1193) is a Phosphotyrosine; by FYN.

The protein belongs to the immunoglobulin superfamily. As to quaternary structure, interacts with CD2AP (via C-terminal domain). Interacts with MAGI1 (via PDZ 2 and 3 domains) forming a tripartite complex with IGSF5/JAM4. Interacts with DDN; the interaction is direct. Self-associates (via the Ig-like domains). Also interacts (via the Ig-like domains) with KIRREL1/NEPH1 and KIRREL2; the interaction with KIRREL1 is dependent on KIRREL1 glycosylation. Interacts with KIRREL3. Forms a complex with ACTN4, CASK, IQGAP1, MAGI2, SPTAN1 and SPTBN1. Interacts with NPHS2. Interacts with phosphatidylinositol 3-kinase regulatory subunit PIK3R1; the interaction is reduced by high glucose levels. Post-translationally, phosphorylated at Tyr-1193 by FYN, leading to the recruitment and activation of phospholipase C-gamma-1/PLCG1. Tyrosine phosphorylation is reduced by high glucose levels. Dephosphorylated by tensin TNS2 which leads to reduced binding of NPHN1 to PIK3R1. In terms of tissue distribution, specifically expressed in podocytes of kidney glomeruli.

It localises to the cell membrane. Functionally, seems to play a role in the development or function of the kidney glomerular filtration barrier. Regulates glomerular vascular permeability. May anchor the podocyte slit diaphragm to the actin cytoskeleton. Plays a role in skeletal muscle formation through regulation of myoblast fusion. In Homo sapiens (Human), this protein is Nephrin (NPHS1).